Consider the following 365-residue polypeptide: Chorismate synthase (365 aa).

R47 serves as a coordination point for NADP(+). Residues 124-126 (RAS), G287, 302-306 (KPTAT), and R328 contribute to the FMN site.

Belongs to the chorismate synthase family. In terms of assembly, homotetramer. Requires FMNH2 as cofactor.

The enzyme catalyses 5-O-(1-carboxyvinyl)-3-phosphoshikimate = chorismate + phosphate. Its pathway is metabolic intermediate biosynthesis; chorismate biosynthesis; chorismate from D-erythrose 4-phosphate and phosphoenolpyruvate: step 7/7. In terms of biological role, catalyzes the anti-1,4-elimination of the C-3 phosphate and the C-6 proR hydrogen from 5-enolpyruvylshikimate-3-phosphate (EPSP) to yield chorismate, which is the branch point compound that serves as the starting substrate for the three terminal pathways of aromatic amino acid biosynthesis. This reaction introduces a second double bond into the aromatic ring system. The polypeptide is Chorismate synthase (Prochlorococcus marinus (strain MIT 9215)).